The sequence spans 177 residues: Sec-independent protein translocase protein TatB (177 aa).

Residues 1-21 (MFDFAWSEIAVIGVVALVVIG) traverse the membrane as a helical segment. The span at 136 to 146 (REKTVSSETAR) shows a compositional bias: basic and acidic residues. Residues 136–177 (REKTVSSETARRAATAPAFIPPGEAFRSARRAPAFIPPADQG) are disordered.

It belongs to the TatB family. As to quaternary structure, the Tat system comprises two distinct complexes: a TatABC complex, containing multiple copies of TatA, TatB and TatC subunits, and a separate TatA complex, containing only TatA subunits. Substrates initially bind to the TatABC complex, which probably triggers association of the separate TatA complex to form the active translocon.

Its subcellular location is the cell inner membrane. Part of the twin-arginine translocation (Tat) system that transports large folded proteins containing a characteristic twin-arginine motif in their signal peptide across membranes. Together with TatC, TatB is part of a receptor directly interacting with Tat signal peptides. TatB may form an oligomeric binding site that transiently accommodates folded Tat precursor proteins before their translocation. In Granulibacter bethesdensis (strain ATCC BAA-1260 / CGDNIH1), this protein is Sec-independent protein translocase protein TatB.